The following is a 168-amino-acid chain: Photosystem I assembly protein Ycf3 (168 aa).

3 TPR repeats span residues 35 to 68 (AFTY…EMDP), 72 to 105 (SYIL…NPFL), and 120 to 153 (GEQA…TPGN).

This sequence belongs to the Ycf3 family.

The protein localises to the plastid. It localises to the chloroplast thylakoid membrane. Functionally, essential for the assembly of the photosystem I (PSI) complex. May act as a chaperone-like factor to guide the assembly of the PSI subunits. This Pelargonium hortorum (Common geranium) protein is Photosystem I assembly protein Ycf3.